A 561-amino-acid polypeptide reads, in one-letter code: 2-methylisocitrate lyase, mitochondrial (561 aa).

Positions 154–177 (KAQSMHDRKQWDTRRKMSPDERSK) are disordered. Residues 157 to 177 (SMHDRKQWDTRRKMSPDERSK) are compositionally biased toward basic and acidic residues. Cys228 is a catalytic residue.

It belongs to the isocitrate lyase/PEP mutase superfamily. Isocitrate lyase family. Mg(2+) is required as a cofactor.

It localises to the mitochondrion matrix. It carries out the reaction (2S,3R)-3-hydroxybutane-1,2,3-tricarboxylate = pyruvate + succinate. Its pathway is organic acid metabolism; propanoate degradation. Functionally, component of the methylcitrate cycle that catalyzes the formation of pyruvate and succinate from 2-methylisocitrate during the metabolism of endogenous propionyl-CoA. Plays an important role for growth and development, but also in antagonism, root colonization and induction of defense responses in plants. This Hypocrea atroviridis (strain ATCC 20476 / IMI 206040) (Trichoderma atroviride) protein is 2-methylisocitrate lyase, mitochondrial.